We begin with the raw amino-acid sequence, 28 residues long: KKCLTKYSAGLQTSQTCPAGQKICFKKW.

Cys3 and Cys24 form a disulfide bridge.

It belongs to the three-finger toxin family. Short-chain subfamily. As to expression, expressed by the venom gland.

It is found in the secreted. In terms of biological role, binds and may inhibit nicotinic acetylcholine receptors (nAChR). This chain is Nicotinic acetylcholine receptor-binding protein Mnn-3C, found in Micrurus nigrocinctus (Central American coral snake).